Reading from the N-terminus, the 284-residue chain is Tropomyosin Tod p 1.0102 (284 aa).

The stretch at 15–273 forms a coiled coil; sequence KEVATDKAEQ…KERYKSISDE (259 aa). The segment at 103–136 is disordered; sequence EERLTSAQSKLEDASKAADESERGRKVLENRSQG.

The protein belongs to the tropomyosin family. As to quaternary structure, homodimer. In terms of processing, the N-terminus is blocked. Expressed in mantle muscle (at protein level).

Tropomyosin, in association with the troponin complex, plays a central role in the calcium dependent regulation of muscle contraction. This chain is Tropomyosin Tod p 1.0102, found in Todarodes pacificus (Japanese flying squid).